We begin with the raw amino-acid sequence, 102 residues long: Small ribosomal subunit protein uS10 (102 aa).

This sequence belongs to the universal ribosomal protein uS10 family. As to quaternary structure, part of the 30S ribosomal subunit.

Functionally, involved in the binding of tRNA to the ribosomes. This chain is Small ribosomal subunit protein uS10, found in Clostridium kluyveri (strain NBRC 12016).